A 333-amino-acid polypeptide reads, in one-letter code: Protoheme IX farnesyltransferase (333 aa).

The next 8 helical transmembrane spans lie at 31–51 (VMSLVVFTGLTGLLAARAPIH), 52–72 (PVLAAIAVLCIAVGAGASGAL), 115–135 (MFLGFAVNWLAAGLLAFTIVF), 152–172 (IVIGGLAGALPPAIGWAAATG), 178–198 (AWLMVAIIFFWTPPHFWALSL), 223–243 (KQILLYSLILFPICLSPVLTG), 244–264 (LGGPIYLAVSGLGGLVFLLLA), and 303–323 (LFAFSILYLFALFAALLGEAV).

It belongs to the UbiA prenyltransferase family. Protoheme IX farnesyltransferase subfamily.

It localises to the cell inner membrane. It carries out the reaction heme b + (2E,6E)-farnesyl diphosphate + H2O = Fe(II)-heme o + diphosphate. It participates in porphyrin-containing compound metabolism; heme O biosynthesis; heme O from protoheme: step 1/1. In terms of biological role, converts heme B (protoheme IX) to heme O by substitution of the vinyl group on carbon 2 of heme B porphyrin ring with a hydroxyethyl farnesyl side group. The polypeptide is Protoheme IX farnesyltransferase (Caulobacter vibrioides (strain ATCC 19089 / CIP 103742 / CB 15) (Caulobacter crescentus)).